The chain runs to 488 residues: Glutamate--tRNA ligase (488 aa).

A 'HIGH' region motif is present at residues 16–26 (PSPTGEPHVGT). Residues 257-261 (KLSKR) carry the 'KMSKS' region motif. Lys260 is a binding site for ATP.

Belongs to the class-I aminoacyl-tRNA synthetase family. Glutamate--tRNA ligase type 1 subfamily. As to quaternary structure, monomer.

It is found in the cytoplasm. The catalysed reaction is tRNA(Glu) + L-glutamate + ATP = L-glutamyl-tRNA(Glu) + AMP + diphosphate. Functionally, catalyzes the attachment of glutamate to tRNA(Glu) in a two-step reaction: glutamate is first activated by ATP to form Glu-AMP and then transferred to the acceptor end of tRNA(Glu). The sequence is that of Glutamate--tRNA ligase from Rhizobium etli (strain ATCC 51251 / DSM 11541 / JCM 21823 / NBRC 15573 / CFN 42).